A 102-amino-acid chain; its full sequence is Protein transport protein sec61 subunit beta (102 aa).

Over residues 1 to 15 (MSSTKASGSVKNSAA) the composition is skewed to polar residues. The tract at residues 1–53 (MSSTKASGSVKNSAASAPGGPKSQIRRRAAVEKNTKESNSGPAGARAAGAPGS) is disordered. At 1-72 (MSSTKASGSV…DEASGFKVDP (72 aa)) the chain is on the cytoplasmic side. Residues 41 to 52 (GPAGARAAGAPG) show a composition bias toward low complexity. A helical transmembrane segment spans residues 73–93 (VVVMVLSVGFIASVFLLHIVA).

Belongs to the SEC61-beta family. Heterotrimeric complex composed of SEC61, SBH1 and SSS1.

It is found in the endoplasmic reticulum membrane. In terms of biological role, necessary for protein translocation in the endoplasmic reticulum. The polypeptide is Protein transport protein sec61 subunit beta (sbh1) (Schizosaccharomyces pombe (strain 972 / ATCC 24843) (Fission yeast)).